A 569-amino-acid polypeptide reads, in one-letter code: 2-succinyl-5-enolpyruvyl-6-hydroxy-3-cyclohexene-1-carboxylate synthase (569 aa).

It belongs to the TPP enzyme family. MenD subfamily. Homodimer. Requires Mg(2+) as cofactor. It depends on Mn(2+) as a cofactor. Thiamine diphosphate serves as cofactor.

The catalysed reaction is isochorismate + 2-oxoglutarate + H(+) = 5-enolpyruvoyl-6-hydroxy-2-succinyl-cyclohex-3-ene-1-carboxylate + CO2. The protein operates within quinol/quinone metabolism; 1,4-dihydroxy-2-naphthoate biosynthesis; 1,4-dihydroxy-2-naphthoate from chorismate: step 2/7. It functions in the pathway quinol/quinone metabolism; menaquinone biosynthesis. Functionally, catalyzes the thiamine diphosphate-dependent decarboxylation of 2-oxoglutarate and the subsequent addition of the resulting succinic semialdehyde-thiamine pyrophosphate anion to isochorismate to yield 2-succinyl-5-enolpyruvyl-6-hydroxy-3-cyclohexene-1-carboxylate (SEPHCHC). This chain is 2-succinyl-5-enolpyruvyl-6-hydroxy-3-cyclohexene-1-carboxylate synthase, found in Haemophilus ducreyi (strain 35000HP / ATCC 700724).